The sequence spans 318 residues: Trans-prenyltransferase (318 aa).

The chain crosses the membrane as a helical span at residues 1 to 21 (MLHLIYISIIVVLIIILISYT). Positions 85, 88, and 122 each coordinate isopentenyl diphosphate. 2 residues coordinate Mg(2+): D129 and D135. Residue R140 participates in dimethylallyl diphosphate binding. R141 contributes to the isopentenyl diphosphate binding site. The dimethylallyl diphosphate site is built by K216, T217, and Q254.

Belongs to the FPP/GGPP synthase family. Asfivirus trans-prenyltransferase subfamily. Mg(2+) is required as a cofactor.

The protein localises to the host endoplasmic reticulum. The protein resides in the host membrane. It catalyses the reaction isopentenyl diphosphate + dimethylallyl diphosphate = (2E)-geranyl diphosphate + diphosphate. The catalysed reaction is isopentenyl diphosphate + (2E)-geranyl diphosphate = (2E,6E)-farnesyl diphosphate + diphosphate. The enzyme catalyses isopentenyl diphosphate + (2E,6E)-farnesyl diphosphate = (2E,6E,10E)-geranylgeranyl diphosphate + diphosphate. It carries out the reaction isopentenyl diphosphate + (2E,6E,10E)-geranylgeranyl diphosphate = (2E,6E,10E,14E)-geranylfarnesyl diphosphate + diphosphate. The protein operates within isoprenoid biosynthesis; farnesyl diphosphate biosynthesis; farnesyl diphosphate from geranyl diphosphate and isopentenyl diphosphate: step 1/1. Its pathway is isoprenoid biosynthesis; geranyl diphosphate biosynthesis; geranyl diphosphate from dimethylallyl diphosphate and isopentenyl diphosphate: step 1/1. It functions in the pathway isoprenoid biosynthesis; geranylgeranyl diphosphate biosynthesis; geranylgeranyl diphosphate from farnesyl diphosphate and isopentenyl diphosphate: step 1/1. Its function is as follows. Trans-prenyltransferase that catalyzes the sequential condensation of isopentenyl diphosphate (IPP) with different allylic diphosphates, such as dimethylallyl diphosphate (DMAPP), geranyl diphosphate (GPP), farnesyl diphosphate (FPP) and geranylgeranyl diphosphate (GGPP), farnesyl diphosphate being the best allylic substrate. This chain is Trans-prenyltransferase, found in Ornithodoros (relapsing fever ticks).